The sequence spans 187 residues: Threonylcarbamoyl-AMP synthase (187 aa).

Residues 4 to 187 (TLTLSEAVTA…DARSGHILRL (184 aa)) form the YrdC-like domain.

It belongs to the SUA5 family. TsaC subfamily.

The protein resides in the cytoplasm. The catalysed reaction is L-threonine + hydrogencarbonate + ATP = L-threonylcarbamoyladenylate + diphosphate + H2O. Functionally, required for the formation of a threonylcarbamoyl group on adenosine at position 37 (t(6)A37) in tRNAs that read codons beginning with adenine. Catalyzes the conversion of L-threonine, HCO(3)(-)/CO(2) and ATP to give threonylcarbamoyl-AMP (TC-AMP) as the acyladenylate intermediate, with the release of diphosphate. The sequence is that of Threonylcarbamoyl-AMP synthase from Xylella fastidiosa (strain M12).